The chain runs to 428 residues: Somatostatin receptor type 3 (428 aa).

The Extracellular portion of the chain corresponds to 1–45; the sequence is MAAVTYPSSVPTTLDPGNASSAWPLDTSLGNASAGTSLAGLAVSG. Residues N18 and N31 are each glycosylated (N-linked (GlcNAc...) asparagine). A helical membrane pass occupies residues 46 to 71; the sequence is ILISLVYLVVCVVGLLGNSLVIYVVL. The Cytoplasmic segment spans residues 72-81; sequence RHTSSPSVTS. A helical membrane pass occupies residues 82–103; the sequence is VYILNLALADELFMLGLPFLAA. The Extracellular portion of the chain corresponds to 104-118; the sequence is QNALSYWPFGSLMCR. C117 and C192 are disulfide-bonded. A helical membrane pass occupies residues 119–140; it reads LVMAVDGINQFTSIFCLTVMSV. Residues 141–162 are Cytoplasmic-facing; that stretch reads DRYLAVVHPTRSARWRTAPVAR. The chain crosses the membrane as a helical span at residues 163 to 182; sequence MVSAAVWVASAVVVLPVVVF. Residues 183 to 206 are Extracellular-facing; it reads SGVPRGMSTCHMQWPEPAAAWRTA. Residues 207–232 form a helical membrane-spanning segment; that stretch reads FIIYTAALGFFGPLLVICLCYLLIVV. The Cytoplasmic segment spans residues 233–266; the sequence is KVRSTTRRVRAPSCQWVQAPACQRRRRSERRVTR. A helical transmembrane segment spans residues 267–288; it reads MVVAVVALFVLCWMPFYLLNIV. Over 289–302 the chain is Extracellular; the sequence is NVVCPLPEEPAFFG. A helical transmembrane segment spans residues 303-325; the sequence is LYFLVVALPYANSCANPILYGFL. Over 326-428 the chain is Cytoplasmic; sequence SYRFKQGFRR…GDKASTLSHL (103 aa). A phosphoserine mark is found at S341, S346, and S351. The tract at residues 343 to 428 is disordered; it reads RVRSQEPGSG…GDKASTLSHL (86 aa). T357 is modified (phosphothreonine). The span at 357 to 370 shows a compositional bias: acidic residues; sequence TEEEEDEEEEERRE. Polar residues predominate over residues 385 to 412; it reads RLSQIAQPGPSGQQQRPCTGTAKEQQLL.

The protein belongs to the G-protein coupled receptor 1 family. Homodimer and heterodimer with SSTR2. Heterodimerization with SSTR2 inactivates SSTR3 receptor function. Phosphorylated. Phosphorylation increases upon somatostatin binding. In terms of tissue distribution, densely expressed in cerebellum and at moderate levels in the amygdala, cortex, striatum, spleen, liver and pituitary.

It is found in the cell membrane. In terms of biological role, receptor for somatostatin-14 and -28. This receptor is coupled via pertussis toxin sensitive G proteins to inhibition of adenylyl cyclase. The chain is Somatostatin receptor type 3 (Sstr3) from Rattus norvegicus (Rat).